A 293-amino-acid polypeptide reads, in one-letter code: Acetylglutamate kinase (293 aa).

Substrate is bound by residues 65-66, Arg87, and Asn188; that span reads GG.

This sequence belongs to the acetylglutamate kinase family. ArgB subfamily.

It localises to the cytoplasm. The catalysed reaction is N-acetyl-L-glutamate + ATP = N-acetyl-L-glutamyl 5-phosphate + ADP. It functions in the pathway amino-acid biosynthesis; L-arginine biosynthesis; N(2)-acetyl-L-ornithine from L-glutamate: step 2/4. Catalyzes the ATP-dependent phosphorylation of N-acetyl-L-glutamate. The polypeptide is Acetylglutamate kinase (Symbiobacterium thermophilum (strain DSM 24528 / JCM 14929 / IAM 14863 / T)).